A 63-amino-acid chain; its full sequence is uncharacterized protein (63 aa).

2 helical membrane-spanning segments follow: residues 3–23 (VFLI…VYYI) and 42–62 (ALVC…TKLL).

Its subcellular location is the cell membrane. This is an uncharacterized protein from Bacillus subtilis (strain 168).